We begin with the raw amino-acid sequence, 58 residues long: uncharacterized protein (58 aa).

The protein localises to the plastid. The protein resides in the chloroplast. This is an uncharacterized protein from Pyropia yezoensis (Susabi-nori).